We begin with the raw amino-acid sequence, 263 residues long: Pro-opiomelanocortin (263 aa).

The first 26 residues, methionine 1–serine 26, serve as a signal peptide directing secretion. Glutamine 27 is modified (pyrrolidone carboxylic acid). Phenylalanine 87 is subject to Phenylalanine amide. A glycan (N-linked (GlcNAc...) asparagine) is linked at asparagine 91. Residues glutamate 107–serine 141 constitute a propeptide that is removed on maturation. At valine 156 the chain carries Valine amide.

This sequence belongs to the POMC family. Specific enzymatic cleavages at paired basic residues yield the different active peptides.

The protein localises to the secreted. In terms of biological role, stimulates the adrenal glands to release cortisol. Functionally, anorexigenic peptide. Increases the pigmentation of skin by increasing melanin production in melanocytes. Its function is as follows. Increases the pigmentation of skin by increasing melanin production in melanocytes. Endogenous orexigenic opiate. In terms of biological role, endogenous opiate. The sequence is that of Pro-opiomelanocortin (pomc) from Aquarana catesbeiana (American bullfrog).